The primary structure comprises 659 residues: Biosynthetic arginine decarboxylase (659 aa).

Lys128 carries the N6-(pyridoxal phosphate)lysine modification. 308–318 (FDVGGGLGVDY) provides a ligand contact to substrate.

It belongs to the Orn/Lys/Arg decarboxylase class-II family. SpeA subfamily. The cofactor is Mg(2+). It depends on pyridoxal 5'-phosphate as a cofactor.

The catalysed reaction is L-arginine + H(+) = agmatine + CO2. It functions in the pathway amine and polyamine biosynthesis; agmatine biosynthesis; agmatine from L-arginine: step 1/1. Its function is as follows. Catalyzes the biosynthesis of agmatine from arginine. This chain is Biosynthetic arginine decarboxylase, found in Yersinia pestis.